We begin with the raw amino-acid sequence, 409 residues long: Thiaminase-1 (409 aa).

The first 29 residues, 1 to 29 (MSKVKGFIYKPLMVMLALLLVVVSPAGAG), serve as a signal peptide directing secretion. The active-site Nucleophile is the C143. E271 serves as the catalytic Proton acceptor.

As to quaternary structure, monomer.

The protein localises to the secreted. It carries out the reaction pyridine + thiamine = heteropyrithiamine + 5-(2-hydroxyethyl)-4-methylthiazole. Functionally, degrades thiamine by replacing its thiazole moiety with a wide range of nucleophiles. In Paenibacillus thiaminolyticus (Bacillus thiaminolyticus), this protein is Thiaminase-1.